A 162-amino-acid chain; its full sequence is MRRITHFFGSLFLVELLRGMMLTGRHLFARKVTVQFPEEKTPQSPRFRGLHALRRYPNGEERCIACKLCEAVCPALAITIDSEQRADGTRRTTRYDIDLTKCIFCGFCEESCPVDSIVETRILEYHGEQRGDLIYTKPMLLAIGDKYEAQIAQDRAQDAKYR.

2 4Fe-4S ferredoxin-type domains span residues 53–83 (LRRY…IDSE) and 93–122 (TRYD…ETRI). [4Fe-4S] cluster is bound by residues Cys63, Cys66, Cys69, Cys73, Cys102, Cys105, Cys108, and Cys112.

This sequence belongs to the complex I 23 kDa subunit family. NDH-1 is composed of 14 different subunits. Subunits NuoA, H, J, K, L, M, N constitute the membrane sector of the complex. Requires [4Fe-4S] cluster as cofactor.

It is found in the cell inner membrane. It catalyses the reaction a quinone + NADH + 5 H(+)(in) = a quinol + NAD(+) + 4 H(+)(out). NDH-1 shuttles electrons from NADH, via FMN and iron-sulfur (Fe-S) centers, to quinones in the respiratory chain. The immediate electron acceptor for the enzyme in this species is believed to be ubiquinone. Couples the redox reaction to proton translocation (for every two electrons transferred, four hydrogen ions are translocated across the cytoplasmic membrane), and thus conserves the redox energy in a proton gradient. The polypeptide is NADH-quinone oxidoreductase subunit I (Thiobacillus denitrificans (strain ATCC 25259 / T1)).